The primary structure comprises 208 residues: 3-demethoxyubiquinol 3-hydroxylase (208 aa).

Residues Glu-57, Glu-87, His-90, Glu-139, Glu-171, and His-174 each coordinate Fe cation.

This sequence belongs to the COQ7 family. Fe cation serves as cofactor.

It localises to the cell membrane. The catalysed reaction is a 5-methoxy-2-methyl-3-(all-trans-polyprenyl)benzene-1,4-diol + AH2 + O2 = a 3-demethylubiquinol + A + H2O. It functions in the pathway cofactor biosynthesis; ubiquinone biosynthesis. Functionally, catalyzes the hydroxylation of 2-nonaprenyl-3-methyl-6-methoxy-1,4-benzoquinol during ubiquinone biosynthesis. This is 3-demethoxyubiquinol 3-hydroxylase from Burkholderia mallei (strain NCTC 10229).